A 957-amino-acid polypeptide reads, in one-letter code: Exoribonuclease II, mitochondrial (957 aa).

The transit peptide at Met1–Ile54 directs the protein to the mitochondrion. An RNB domain is found at Arg503–Leu843.

The protein belongs to the RNR ribonuclease family.

The protein resides in the mitochondrion. The catalysed reaction is Exonucleolytic cleavage in the 3'- to 5'-direction to yield nucleoside 5'-phosphates.. Functionally, required for intron-independent turnover and processing of mitochondrial RNA. Participates in 3'-mtRNA processing where it hydrolyzes single-stranded RNA or partially double-stranded RNA with 3'-single-stranded tails. The protein is Exoribonuclease II, mitochondrial (rpm1) of Schizosaccharomyces pombe (strain 972 / ATCC 24843) (Fission yeast).